The primary structure comprises 1003 residues: X-linked retinitis pigmentosa GTPase regulator (1003 aa).

RCC1 repeat units follow at residues 54–105 (NKLY…STEG), 106–158 (GKVY…LTED), 159–208 (GELF…VTTE), 209–261 (GQLY…LTEK), 262–313 (AVYT…ITDM), and 314–367 (GLMY…FATP). Ser-418 bears the Phosphoserine mark. Residues 460 to 495 (TPEKEGLTQPEPDYFRDNMAKGKETDNSSATDSESL) are disordered. The span at 472-485 (DYFRDNMAKGKETD) shows a compositional bias: basic and acidic residues. Positions 486–495 (NSSATDSESL) are enriched in polar residues. Phosphoserine is present on Ser-520. 4 disordered regions span residues 625–657 (FKAI…LAEM), 691–760 (ESKD…TDQN), 794–932 (LSEI…DVKK), and 968–1003 (AFKG…CTIL). Positions 693 to 715 (KDFVKDSRRNKQDVIFDSERESI) are enriched in basic and acidic residues. 2 stretches are compositionally biased toward acidic residues: residues 716-726 (EEPDSYLEGES) and 797-821 (IPEE…EANE). Positions 827–848 (AGKEEKEIEILSDDLTDRAEDH) are enriched in basic and acidic residues. The segment covering 849–867 (EFSEDEEPEDMAEELDEDL) has biased composition (acidic residues). Positions 882–896 (SLKKDETTKQEKRAI) are enriched in basic and acidic residues. A compositionally biased stretch (low complexity) spans 913-924 (SSSSEVLNDSES). Residues 978-989 (QNHMGQNHQDTS) are compositionally biased toward polar residues. Cys-1000 is subject to Cysteine methyl ester. Cys-1000 carries S-geranylgeranyl cysteine lipidation. Residues 1001–1003 (TIL) constitute a propeptide, removed in mature form.

In terms of assembly, interacts with PDE6D. Interacts with RPGRIP1. Interacts with RPGRIP1L. PDE6D, RPGRIP1 and RPGRIP1L may compete for the same binding sites. Interacts with NPM1. Interacts with SMC1A and SMC3. Interacts with CEP290. Interacts with WHRN. Interacts with SPATA7. Interacts with RAB37 and RAB8A (in GDP-bound forms); functions as GEF for RAB37 and RAB8A. Post-translationally, prenylated. Isoform 1 is expressed exclusively in testis. Isoforms 2, 3 and 4 are widely expressed.

It is found in the golgi apparatus. It localises to the cell projection. The protein resides in the cilium. The protein localises to the cytoplasm. Its subcellular location is the cytoskeleton. It is found in the cilium basal body. It localises to the microtubule organizing center. The protein resides in the centrosome. The protein localises to the cilium axoneme. Its subcellular location is the flagellum axoneme. In terms of biological role, acts as a guanine-nucleotide releasing factor (GEF) for RAB8A and RAB37 by promoting the conversion of inactive RAB-GDP to the active form RAB-GTP. GEF activity towards RAB8A may facilitate ciliary trafficking by modulating ciliary intracellular localization of RAB8A. GEF activity towards RAB37 maintains autophagic homeostasis and retinal function. Involved in photoreceptor integrity. May control cilia formation by regulating actin stress filaments and cell contractility. May be involved in microtubule organization and regulation of transport in primary cilia. May play a critical role in spermatogenesis and in intraflagellar transport processes. This is X-linked retinitis pigmentosa GTPase regulator (RPGR) from Canis lupus familiaris (Dog).